Consider the following 542-residue polypeptide: Putative ankyrin repeat protein FPV115 (542 aa).

ANK repeat units follow at residues Phe33–Ser62, Asp157–Leu186, Asn218–Thr247, Lys251–Val281, Glu285–Val314, Thr316–Thr345, Asp347–Ser375, and Cys378–Ala407.

The chain is Putative ankyrin repeat protein FPV115 from Fowlpox virus (strain NVSL) (FPV).